The sequence spans 278 residues: GTPase Era (278 aa).

In terms of domain architecture, Era-type G spans 7-168; the sequence is YCGYIAIVGK…ENLIYPYLPN (162 aa). The G1 stretch occupies residues 15–22; sequence GKPNVGKS. 15 to 22 is a GTP binding site; it reads GKPNVGKS. The segment at 41 to 45 is G2; the sequence is NTTQK. Residues 62–65 form a G3 region; it reads DTPG. Residues 62 to 66 and 117 to 120 each bind GTP; these read DTPGI and NKID. A G4 region spans residues 117-120; it reads NKID. The segment at 147 to 149 is G5; it reads ISA. In terms of domain architecture, KH type-2 spans 199–276; sequence LRDELPSIIT…YLIIWVKVKI (78 aa).

Belongs to the TRAFAC class TrmE-Era-EngA-EngB-Septin-like GTPase superfamily. Era GTPase family. Monomer.

Its subcellular location is the cytoplasm. The protein resides in the cell membrane. Functionally, an essential GTPase that binds both GDP and GTP, with rapid nucleotide exchange. Plays a role in 16S rRNA processing and 30S ribosomal subunit biogenesis and possibly also in cell cycle regulation and energy metabolism. The protein is GTPase Era of Buchnera aphidicola subsp. Schizaphis graminum (strain Sg).